The chain runs to 234 residues: MAKLTKRMRVIRDKVDATKQYDITEAVALLKELATAKFVESVDVAVNLGIDARKSDQNVRGATVLPNGTGRSVRVAVFAQGPNAEAAKAAGAELVGMEDLADQIKKGEMNFDVVIASPDAMRVVGQLGQILGPRGLMPNPKVGTVTPNVAEAVKNAKAGQVRYRNDKNGIIHTTIGKVDFESDKLKENLEALLVALKKAKPSQAKGVYIKKVSLSTTMGAGVAIDQSGLTAVAN.

This sequence belongs to the universal ribosomal protein uL1 family. In terms of assembly, part of the 50S ribosomal subunit.

Functionally, binds directly to 23S rRNA. The L1 stalk is quite mobile in the ribosome, and is involved in E site tRNA release. In terms of biological role, protein L1 is also a translational repressor protein, it controls the translation of the L11 operon by binding to its mRNA. The protein is Large ribosomal subunit protein uL1 of Serratia proteamaculans (strain 568).